We begin with the raw amino-acid sequence, 331 residues long: DNA fragmentation factor subunit alpha (331 aa).

At M1 the chain carries N-acetylmethionine. The CIDE-N domain occupies 17–96 (PLKPCLLRRN…ALACNEKWIY (80 aa)). T243 is modified (phosphothreonine). The tract at residues 306-331 (LRNLSARRSPLPGEPQRPKRAKRDSS) is disordered.

As to quaternary structure, heterodimer of DFFA and DFFB. Post-translationally, caspase-3 cleaves DFF45 at 2 sites to generate an active factor.

It localises to the cytoplasm. In terms of biological role, inhibitor of the caspase-activated DNase (DFF40). The polypeptide is DNA fragmentation factor subunit alpha (Dffa) (Mus musculus (Mouse)).